The chain runs to 257 residues: Transcription factor bHLH55 (257 aa).

The 53-residue stretch at 74–126 (NKRAKHKELERQRRQENTSLFKILRYLLPSQYIKGKRSSADHVLEAVNYIKDL) folds into the bHLH domain.

As to quaternary structure, homodimer. As to expression, expressed in roots, leaves, stems, and flowers.

It is found in the nucleus. The sequence is that of Transcription factor bHLH55 (BHLH55) from Arabidopsis thaliana (Mouse-ear cress).